A 547-amino-acid chain; its full sequence is Inositol 1,4,5-trisphosphate receptor-interacting protein (547 aa).

The first 15 residues, 1-15 (MAMGLFRVCLVVVTA), serve as a signal peptide directing secretion. Residues 16–83 (IINHPLLFPR…EEGRQQNETR (68 aa)) are Extracellular-facing. N-linked (GlcNAc...) asparagine glycosylation is found at N27 and N80. A coiled-coil region spans residues 32-82 (ENEEEIIRKMQAHQEKLQLEQLRLEEEVARLAAEKEALEQVAEEGRQQNET). A helical transmembrane segment spans residues 84-100 (VAWDLWSTLCMILFLMI). Residues 101–547 (EVWRQDHQEG…VPSDQPTPKS (447 aa)) are Cytoplasmic-facing. Residues 109–129 (EGPSPECLGGEEDELPGLGGA) are disordered. Residue S547 is modified to Phosphoserine.

The protein belongs to the ITPRIP family. As to quaternary structure, interacts with ITPR. Detected in brain where it is concentrated in cerebellar Purkinje cells (at protein level).

Its subcellular location is the cell membrane. The protein resides in the nucleus outer membrane. Enhances Ca(2+)-mediated inhibition of inositol 1,4,5-triphosphate receptor (ITPR) Ca(2+) release. The polypeptide is Inositol 1,4,5-trisphosphate receptor-interacting protein (ITPRIP) (Homo sapiens (Human)).